Reading from the N-terminus, the 291-residue chain is MELAEFWNDLNTFTIYGPNHTDMTTKYKYSYHFPGEQVADPQYWTILFQKYWYHSITISVLYFILIKVIQKFMENRKPFTLKYPLILWNGALAAFSIIATLRFSIDPLRSLYAEGFYKTLCYSCNPTDVAAFWSFAFALSKIVELGDTMFIILRKRPLIFLHYYHHAAVLIYTVHSGAEHTAAGRFYILMNYFAHSLMYTYYTVSAMGYRLPKWVSMTVTTVQTTQMLAGVGITWMVYKVKTEYKLPCQQSVANLYLAFVIYVTFAILFIQFFVKAYIIKSSKKSKSVKNE.

The next 3 helical transmembrane spans lie at 46–66 (ILFQ…FILI), 79–99 (FTLK…SIIA), and 254–274 (NLYL…QFFV).

Belongs to the ELO family.

It is found in the membrane. It catalyses the reaction a very-long-chain acyl-CoA + malonyl-CoA + H(+) = a very-long-chain 3-oxoacyl-CoA + CO2 + CoA. Its pathway is lipid metabolism; fatty acid biosynthesis. Its function is as follows. Could be implicated in synthesis of very long chain fatty acids. The chain is Putative fatty acid elongase 4 (elo-4) from Caenorhabditis elegans.